A 450-amino-acid polypeptide reads, in one-letter code: Tubulin alpha-2 chain (450 aa).

Position 11 (Gln-11) interacts with GTP. Lys-40 is modified (N6-acetyllysine). Residues Glu-71, Gly-144, Thr-145, Thr-179, Asn-206, and Asn-228 each contribute to the GTP site. Glu-71 serves as a coordination point for Mg(2+). The active site involves Glu-254.

It belongs to the tubulin family. In terms of assembly, dimer of alpha and beta chains. A typical microtubule is a hollow water-filled tube with an outer diameter of 25 nm and an inner diameter of 15 nM. Alpha-beta heterodimers associate head-to-tail to form protofilaments running lengthwise along the microtubule wall with the beta-tubulin subunit facing the microtubule plus end conferring a structural polarity. Microtubules usually have 13 protofilaments but different protofilament numbers can be found in some organisms and specialized cells. The cofactor is Mg(2+). Undergoes a tyrosination/detyrosination cycle, the cyclic removal and re-addition of a C-terminal tyrosine residue by the enzymes tubulin tyrosine carboxypeptidase (TTCP) and tubulin tyrosine ligase (TTL), respectively. In terms of processing, acetylation of alpha chains at Lys-40 stabilizes microtubules and affects affinity and processivity of microtubule motors. This modification has a role in multiple cellular functions, ranging from cell motility, cell cycle progression or cell differentiation to intracellular trafficking and signaling.

The protein resides in the cytoplasm. It localises to the cytoskeleton. The catalysed reaction is GTP + H2O = GDP + phosphate + H(+). In terms of biological role, tubulin is the major constituent of microtubules, a cylinder consisting of laterally associated linear protofilaments composed of alpha- and beta-tubulin heterodimers. Microtubules grow by the addition of GTP-tubulin dimers to the microtubule end, where a stabilizing cap forms. Below the cap, tubulin dimers are in GDP-bound state, owing to GTPase activity of alpha-tubulin. The protein is Tubulin alpha-2 chain of Gossypium hirsutum (Upland cotton).